Reading from the N-terminus, the 342-residue chain is Anthranilate phosphoribosyltransferase (342 aa).

Residues Gly-83, 86–87, Thr-91, 93–96, 111–119, and Ser-123 contribute to the 5-phospho-alpha-D-ribose 1-diphosphate site; these read GD, NIST, and KHGGRSVSS. Residue Gly-83 coordinates anthranilate. Position 95 (Ser-95) interacts with Mg(2+). Arg-169 contributes to the anthranilate binding site. Mg(2+)-binding residues include Asp-228 and Glu-229.

The protein belongs to the anthranilate phosphoribosyltransferase family. As to quaternary structure, homodimer. Requires Mg(2+) as cofactor.

It catalyses the reaction N-(5-phospho-beta-D-ribosyl)anthranilate + diphosphate = 5-phospho-alpha-D-ribose 1-diphosphate + anthranilate. It participates in amino-acid biosynthesis; L-tryptophan biosynthesis; L-tryptophan from chorismate: step 2/5. Functionally, catalyzes the transfer of the phosphoribosyl group of 5-phosphorylribose-1-pyrophosphate (PRPP) to anthranilate to yield N-(5'-phosphoribosyl)-anthranilate (PRA). This chain is Anthranilate phosphoribosyltransferase, found in Chromobacterium violaceum (strain ATCC 12472 / DSM 30191 / JCM 1249 / CCUG 213 / NBRC 12614 / NCIMB 9131 / NCTC 9757 / MK).